The chain runs to 496 residues: Squalene epoxidase ERG1 (496 aa).

The Cytoplasmic segment spans residues 1–16 (MSAVNVAPELINADNT). The helical transmembrane segment at 17–37 (ITYDAIVIGAGVIGPCVATGL) threads the bilayer. Residues 28–29 (VI), 48–49 (ER), R56, and R158 contribute to the FAD site. At 38 to 474 (ARKGKKVLIV…FLGLPMALLE (437 aa)) the chain is on the lumenal side. Residues K284, K289, and K311 each participate in a glycyl lysine isopeptide (Lys-Gly) (interchain with G-Cter in ubiquitin) cross-link. 2 residues coordinate FAD: D335 and M348. A helical transmembrane segment spans residues 475–495 (GIMILITAIRVFTPFLFGELI). G496 is a topological domain (cytoplasmic).

This sequence belongs to the squalene monooxygenase family. In terms of assembly, interacts with ERG28. FAD serves as cofactor.

The protein localises to the microsome membrane. It localises to the endoplasmic reticulum membrane. The protein resides in the lipid droplet. It carries out the reaction squalene + reduced [NADPH--hemoprotein reductase] + O2 = (S)-2,3-epoxysqualene + oxidized [NADPH--hemoprotein reductase] + H2O + H(+). Its pathway is terpene metabolism; lanosterol biosynthesis; lanosterol from farnesyl diphosphate: step 2/3. With respect to regulation, inhibited by the allylamine antimycotic drugs. Its function is as follows. Squalene epoxidase; part of the third module of ergosterol biosynthesis pathway that includes the late steps of the pathway. ERG1 catalyzes the epoxidation of squalene into 2,3-epoxysqualene. The third module or late pathway involves the ergosterol synthesis itself through consecutive reactions that mainly occur in the endoplasmic reticulum (ER) membrane. Firstly, the squalene synthase ERG9 catalyzes the condensation of 2 farnesyl pyrophosphate moieties to form squalene, which is the precursor of all steroids. Squalene synthase is crucial for balancing the incorporation of farnesyl diphosphate (FPP) into sterol and nonsterol isoprene synthesis. Secondly, the squalene epoxidase ERG1 catalyzes the stereospecific oxidation of squalene to (S)-2,3-epoxysqualene, which is considered to be a rate-limiting enzyme in steroid biosynthesis. Then, the lanosterol synthase ERG7 catalyzes the cyclization of (S)-2,3 oxidosqualene to lanosterol, a reaction that forms the sterol core. In the next steps, lanosterol is transformed to zymosterol through a complex process involving various demethylation, reduction and desaturation reactions. The lanosterol 14-alpha-demethylase ERG11 (also known as CYP51) catalyzes C14-demethylation of lanosterol to produce 4,4'-dimethyl cholesta-8,14,24-triene-3-beta-ol, which is critical for ergosterol biosynthesis. The C-14 reductase ERG24 reduces the C14=C15 double bond of 4,4-dimethyl-cholesta-8,14,24-trienol to produce 4,4-dimethyl-cholesta-8,24-dienol. 4,4-dimethyl-cholesta-8,24-dienol is substrate of the C-4 demethylation complex ERG25-ERG26-ERG27 in which ERG25 catalyzes the three-step monooxygenation required for the demethylation of 4,4-dimethyl and 4alpha-methylsterols, ERG26 catalyzes the oxidative decarboxylation that results in a reduction of the 3-beta-hydroxy group at the C-3 carbon to an oxo group, and ERG27 is responsible for the reduction of the keto group on the C-3. ERG28 has a role as a scaffold to help anchor ERG25, ERG26 and ERG27 to the endoplasmic reticulum and ERG29 regulates the activity of the iron-containing C4-methylsterol oxidase ERG25. Then, the sterol 24-C-methyltransferase ERG6 catalyzes the methyl transfer from S-adenosyl-methionine to the C-24 of zymosterol to form fecosterol. The C-8 sterol isomerase ERG2 catalyzes the reaction which results in unsaturation at C-7 in the B ring of sterols and thus converts fecosterol to episterol. The sterol-C5-desaturase ERG3 then catalyzes the introduction of a C-5 double bond in the B ring to produce 5-dehydroepisterol. The C-22 sterol desaturase ERG5 further converts 5-dehydroepisterol into ergosta-5,7,22,24(28)-tetraen-3beta-ol by forming the C-22(23) double bond in the sterol side chain. Finally, ergosta-5,7,22,24(28)-tetraen-3beta-ol is substrate of the C-24(28) sterol reductase ERG4 to produce ergosterol. This is Squalene epoxidase ERG1 from Saccharomyces cerevisiae (strain ATCC 204508 / S288c) (Baker's yeast).